The primary structure comprises 211 residues: Large ribosomal subunit protein eL13 (211 aa).

This sequence belongs to the eukaryotic ribosomal protein eL13 family. Component of the 60S large ribosomal subunit (LSU).

The protein localises to the cytoplasm. Functionally, component of the ribosome, a large ribonucleoprotein complex responsible for the synthesis of proteins in the cell. The small ribosomal subunit (SSU) binds messenger RNAs (mRNAs) and translates the encoded message by selecting cognate aminoacyl-transfer RNA (tRNA) molecules. The large subunit (LSU) contains the ribosomal catalytic site termed the peptidyl transferase center (PTC), which catalyzes the formation of peptide bonds, thereby polymerizing the amino acids delivered by tRNAs into a polypeptide chain. The nascent polypeptides leave the ribosome through a tunnel in the LSU and interact with protein factors that function in enzymatic processing, targeting, and the membrane insertion of nascent chains at the exit of the ribosomal tunnel. As part of the LSU, it is probably required for its formation and the maturation of rRNAs. In Danio rerio (Zebrafish), this protein is Large ribosomal subunit protein eL13 (rpl13).